Reading from the N-terminus, the 403-residue chain is MAVQTLDDLLNAGVEGRAVLVRSDLNVPLDGDRITDPGRIIASAPTLKALAEAGAKVIVTAHLGRPKGEPDPQYSLAPVAVKLAEVLGRNVQLAGDVVGQDALARAEGLTDGDVLLLENIRFDPRETSKDEAERTKLAKALVELVGDDGAFVSDGFGVVHRAQASVYEVAKLLPHYAGKLVEAEIKVLGKLTEEPERPYAVVLGGSKVSDKLAVIEALAPKVDTLVIGGGMYYTFLAAQGVSVGNSLCEESMIDTCKALLEQYADVIHIPQDVVIADSFSADAESKIVSVLEIPDGWMGLDIGPQSVRRFAAILTSAKTVFWNGPMGVFEFEKFAAGTKGVAEAIIEATGKGAYSVVGGGDSAAAVRQLGLPEDGFSHISTGGGASLEYLEGKELPGIAVLEG.

Residues 24–26 (DLN), arginine 39, 62–65 (HLGR), arginine 121, and arginine 161 each bind substrate. Residues lysine 211, glycine 299, glutamate 330, and 359 to 362 (GGDS) contribute to the ATP site.

This sequence belongs to the phosphoglycerate kinase family. In terms of assembly, monomer.

The protein resides in the cytoplasm. The catalysed reaction is (2R)-3-phosphoglycerate + ATP = (2R)-3-phospho-glyceroyl phosphate + ADP. Its pathway is carbohydrate degradation; glycolysis; pyruvate from D-glyceraldehyde 3-phosphate: step 2/5. This Rhodococcus jostii (strain RHA1) protein is Phosphoglycerate kinase.